Reading from the N-terminus, the 5065-residue chain is Dynein heavy chain-like protein 1 (5065 aa).

Positions 1–1957 (MELEKTHLIN…IIKMADATFE (1957 aa)) are stem. Residues 1677–1705 (QMEGFQKQLDRLSDSLSKIQKALGEYLEK) are a coiled coil. Positions 1958-2179 (YGYEYLGMCE…LRSLKSVLNS (222 aa)) are AAA 1. 1996–2003 (GPAGTGKT) is an ATP binding site. Residues 2203–2223 (FNETLDNNNNNDNNNERKTTT) form a disordered region. Low complexity predominate over residues 2204 to 2215 (NETLDNNNNNDN). AAA regions lie at residues 2281-2632 (NEIH…YEYI), 2751-3004 (DVDR…WKLA), and 3097-3367 (IFNE…GNRY). Residue 2319 to 2326 (GDVGTGKS) participates in ATP binding. The disordered stretch occupies residues 2507–2529 (EKNQNGNENGNENEKKNINIINN). ATP is bound by residues 2790–2797 (GPPGSGKT) and 3135–3142 (GASGAGKT). The stalk stretch occupies residues 3386–3701 (IDEKKEEVSS…ETFINLEEAS (316 aa)). 2 coiled-coil regions span residues 3388–3466 (EKKE…LDEQ) and 3970–3997 (TMEKLKVQGAEASKEVNIAEEVMVEVEN). AAA regions lie at residues 3754–3983 (LSRP…EASK) and 4289–4507 (FNKI…VVDS). Over residues 4686 to 4705 (KDKNKDEDKNKNKENDDNNK) the composition is skewed to basic and acidic residues. The interval 4686–4727 (KDKNKDEDKNKNKENDDNNKKHIGNNKLVISSSERTESETSE) is disordered.

It belongs to the dynein heavy chain family. As to quaternary structure, consists of at least two heavy chains and a number of intermediate and light chains.

It localises to the cytoplasm. Its subcellular location is the cytoskeleton. In terms of biological role, acts as a motor for the intracellular retrograde motility of vesicles and organelles along microtubules. Dynein has ATPase activity; the force-producing power stroke is thought to occur on release of ADP. This is Dynein heavy chain-like protein 1 from Plasmodium falciparum (isolate 3D7).